The sequence spans 111 residues: Probable 4-amino-4-deoxy-L-arabinose-phosphoundecaprenol flippase subunit ArnE (111 aa).

3 helical membrane-spanning segments follow: residues 38-58 (LWLG…LLVL), 61-81 (LPVG…TLAA), and 91-111 (PRHW…GSAA). The 70-residue stretch at 40-109 (LGLALICMGA…IISGIIILGS (70 aa)) folds into the EamA domain.

It belongs to the ArnE family. Heterodimer of ArnE and ArnF.

Its subcellular location is the cell inner membrane. It participates in bacterial outer membrane biogenesis; lipopolysaccharide biosynthesis. Its function is as follows. Translocates 4-amino-4-deoxy-L-arabinose-phosphoundecaprenol (alpha-L-Ara4N-phosphoundecaprenol) from the cytoplasmic to the periplasmic side of the inner membrane. This Salmonella newport (strain SL254) protein is Probable 4-amino-4-deoxy-L-arabinose-phosphoundecaprenol flippase subunit ArnE.